The chain runs to 602 residues: Peptide-N(4)-(N-acetyl-beta-glucosaminyl)asparagine amidase (602 aa).

Residues 2–130 (PVREVSRLPE…EKKFLERFVG (129 aa)) enclose the Thioredoxin domain. Residues C189, C192, C222, and C225 each coordinate Zn(2+). C248 acts as the Nucleophile in catalysis. Active-site residues include H275 and D292. Residues 400–602 (DMGGRTTGSK…ESMVVRVYMK (203 aa)) enclose the PAW domain.

This sequence belongs to the transglutaminase-like superfamily. PNGase family. The cofactor is Zn(2+).

It localises to the cytoplasm. The protein resides in the endoplasmic reticulum. The catalysed reaction is Hydrolysis of an N(4)-(acetyl-beta-D-glucosaminyl)asparagine residue in which the glucosamine residue may be further glycosylated, to yield a (substituted) N-acetyl-beta-D-glucosaminylamine and a peptide containing an aspartate residue.. Its function is as follows. Specifically deglycosylates the denatured form of N-linked glycoproteins in the cytoplasm and assists their proteasome-mediated degradation. Cleaves the beta-aspartyl-glucosamine (GlcNAc) of the glycan and the amide side chain of Asn, converting Asn to Asp. Prefers proteins containing high-mannose over those bearing complex type oligosaccharides. Can recognize misfolded proteins in the endoplasmic reticulum that are exported to the cytosol to be destroyed and deglycosylate them, while it has no activity toward native proteins. Deglycosylation is a prerequisite for subsequent proteasome-mediated degradation of some, but not all, misfolded glycoproteins. Also displays oxidoreductase (thioredoxin) activity. The chain is Peptide-N(4)-(N-acetyl-beta-glucosaminyl)asparagine amidase (png-1) from Caenorhabditis briggsae.